The following is a 406-amino-acid chain: Tyrosine-specific transport system 2 (406 aa).

11 helical membrane passes run 7–27, 38–58, 83–103, 119–139, 150–170, 183–203, 219–239, 279–299, 314–334, 335–355, and 376–396; these read FGSALIIAGTTIGAGMLAMPL, LLLLVGLWALLVYSGLLFVEV, IFATLSLLVLLYALSAAYITG, AMSLKTAIIIFTVVLGSFVVV, VLFIGKLIAFAFVLFMMLPKV, AFVVSAAPIFLTSFGFHVIMA, AILIGTAIPLAAYLVWQLATH, VFSSLALITSFLGVMLGVFEG, FVLTIAAFLPPLVFALFYPEG, FITALSYAGLLCAFYCLILPI, and NFALVLALLIGVVIMLIPFLI.

Belongs to the amino acid/polyamine transporter 2 family. Mtr/TnaB/TyrP permease subfamily.

Its subcellular location is the cell inner membrane. It carries out the reaction L-tyrosine(in) + H(+)(in) = L-tyrosine(out) + H(+)(out). Functionally, transports tyrosine across the cytoplasmic membrane. The transport system is energized by the proton motive force. The protein is Tyrosine-specific transport system 2 (tyrP-B) of Haemophilus influenzae (strain ATCC 51907 / DSM 11121 / KW20 / Rd).